The chain runs to 375 residues: MDNSSRLFSPLRLGKCQLRHRVAMSPLTRFRADDLSVQMPFAKEYYAQRASVPGTFLVSEATSISRESVGFSNVPGIWNAEQVRAWKEIADDVHCKGSFLFLQLWATGRSATPERLQSGDFDFASSSAVPMEPGGAVPRELTEEDIHDLIARFAEAARRAIDAGMDGIELHAANGYLIDQFTQASCNQRTDRWGGSIENRARFAIEVTRSVVAAVGADRVGVKLSPWGKIQGMGTMQDLVPQFQYLVSELRDMGLAYLRLSNSRWIDGVPQEEEDNSIYVHTWGASRPVLLEGGYDPISAQKEADIRFNGYDAVIAFGRFFISNPDLPFRIKAGVDLQKYNRDTFYTPISEKGYIDYPFSTAFLEEHSSKASLKL.

Positions 61, 103, and 171 each coordinate FMN. Tyrosine 176 functions as the Proton donor in the catalytic mechanism. Residues lysine 223, glycine 294, and arginine 319 each contribute to the FMN site.

This sequence belongs to the NADH:flavin oxidoreductase/NADH oxidase family. FMN is required as a cofactor.

It catalyses the reaction (1S,4S)-4-[(4-hydroxyphenyl)methyl]-2,5-diazaspiro[bicyclo[3.2.1]octane-6,1'-cyclohexane]-2',5'-dien-4'-one + 2 NADPH + 2 H(+) = (1S,4S)-4-[(4-hydroxyphenyl)methyl]-2,5-diazaspiro[bicyclo[3.2.1]octane-6,1'-cyclohexan]-4'-one + 2 NADP(+). It participates in alkaloid biosynthesis; ergot alkaloid biosynthesis. Aldehyde reductase; part of the gene cluster that mediates the biosynthesis of the alkaloid (-)-FR901483, a potent immunosuppressant that shows efficacy in animal models and a probable inhibitor of purine nucleotide biosynthesis by targeting phosphoribosylpyrophosphate amidotransferase (PPAT). Within the pathway, FrzD reduces the dienone portion of the pathway intermediates to cyclohexanone. The biosynthesis of (-)-FR901483 starts with the condensation of two L-tyrosines to yield (S,S)-dityrosyl-piperazine. This process occurs in 3 steps with the non-canonical nonribosomal peptide synthetase FrzA catalyzing the reduction of L-tyrosine into L-tyrosinal, the spontaneous condensation of 2 L-tyrosinal units, and the subsequent reduction by the NmrA-like family domain-containing oxidoreductase FrzB. The cytochrome P450 monooxygenase FrzC then performs coupling between N10 and C1' to morph the piperazine into a 1,4-diazabicyclo[3.2.1]octane spiro-fused to a 2,5-cyclohexadienone. The dienone portion is further reduced to cyclohexanone by the flavin-dependent reductase FrzD. The methyltranserases (MTs) FrzE and FrzF are then involved in the methylation at the C10' amine and the C4 phenolic oxygen, respectively. The order of the two MTs appear to be interchangeable. Cleavage of the C9-N10' bond by the dioxygenase FrzG then leads to formation of a conjugated iminium. In addition to the oxidation of C9, an additional dehydrogenation between C7 and C8 can occur to give a likely shunt product. The next biosynthetic step is the intramolecular aldol condensation catalyzed by the newly identified aldolase FrzH to yield an aza-tricyclic product with the formation of a C9-C3' bond. The short-chain dehydrogenase/reductase FrzI then produces dephospho-(-)-FR901483 that is phosphorylated at C4'-OH into (-)-FR901483 by the phosphotransferase FrzJ. The only unassigned enzyme in the cluster is the second cytochrome P450 monooxygenase FrzL. This chain is Aldehyde reductase FrzD, found in Cladobotryum sp.